The following is an 828-amino-acid chain: Periplasmic nitrate reductase (828 aa).

A signal peptide (tat-type signal) is located at residues 1–31 (MKLSRRSFMKANAVAAAAAAAGLSVPGVARA). A 4Fe-4S Mo/W bis-MGD-type domain is found at 39–95 (IKWDKAPCRFCGTGCGVLVGTQQGRVVACQGDPDAPVNRGLNCIKGYFLPKIMYGKD). [4Fe-4S] cluster is bound by residues Cys46, Cys49, Cys53, and Cys81. Residues Lys83, Gln150, Asn175, Cys179, 212 to 219 (WGANMAEM), 243 to 247 (STYQH), 262 to 264 (QSD), Met372, Gln376, Asn482, 508 to 509 (SD), Lys531, Asp558, and 718 to 727 (TGRVLEHWHT) each bind Mo-bis(molybdopterin guanine dinucleotide). Substrate is bound at residue Phe794. Positions 802 and 819 each coordinate Mo-bis(molybdopterin guanine dinucleotide).

This sequence belongs to the prokaryotic molybdopterin-containing oxidoreductase family. NasA/NapA/NarB subfamily. As to quaternary structure, component of the periplasmic nitrate reductase NapAB complex composed of NapA and NapB. The cofactor is [4Fe-4S] cluster. Requires Mo-bis(molybdopterin guanine dinucleotide) as cofactor. Predicted to be exported by the Tat system. The position of the signal peptide cleavage has not been experimentally proven.

It localises to the periplasm. It catalyses the reaction 2 Fe(II)-[cytochrome] + nitrate + 2 H(+) = 2 Fe(III)-[cytochrome] + nitrite + H2O. In terms of biological role, catalytic subunit of the periplasmic nitrate reductase complex NapAB. Receives electrons from NapB and catalyzes the reduction of nitrate to nitrite. This is Periplasmic nitrate reductase from Shigella flexneri serotype 5b (strain 8401).